Reading from the N-terminus, the 315-residue chain is Methionyl-tRNA formyltransferase (315 aa).

Position 113 to 116 (113 to 116 (SLLP)) interacts with (6S)-5,6,7,8-tetrahydrofolate.

This sequence belongs to the Fmt family.

The enzyme catalyses L-methionyl-tRNA(fMet) + (6R)-10-formyltetrahydrofolate = N-formyl-L-methionyl-tRNA(fMet) + (6S)-5,6,7,8-tetrahydrofolate + H(+). Its function is as follows. Attaches a formyl group to the free amino group of methionyl-tRNA(fMet). The formyl group appears to play a dual role in the initiator identity of N-formylmethionyl-tRNA by promoting its recognition by IF2 and preventing the misappropriation of this tRNA by the elongation apparatus. This chain is Methionyl-tRNA formyltransferase, found in Klebsiella pneumoniae subsp. pneumoniae (strain ATCC 700721 / MGH 78578).